Reading from the N-terminus, the 49-residue chain is Large ribosomal subunit protein bL33B (49 aa).

This sequence belongs to the bacterial ribosomal protein bL33 family.

This is Large ribosomal subunit protein bL33B from Bacillus anthracis.